Here is a 642-residue protein sequence, read N- to C-terminus: Kelch-like protein 17 (642 aa).

Residues 1–53 (MQPRSERPAGRTQSPEHGSPGPGPEAPPPPPPQPPAPEAERTRPRQARPAAPM) form a disordered region. Residues 21-37 (GPGPEAPPPPPPQPPAP) show a composition bias toward pro residues. In terms of domain architecture, BTB spans 92-159 (CDIVLHVAAK…AYTAEIVVGE (68 aa)). Positions 194–296 (CLGIRGFADA…SRDFLLGHVD (103 aa)) constitute a BACK domain. Residues 289–641 (DFLLGHVDAE…SPTLSVSSTS (353 aa)) are interaction with F-actin. Kelch repeat units follow at residues 343–389 (VLFA…AVGN), 390–436 (RLYA…ALHG), 438–483 (LYSA…TLDG), 484–530 (NLYA…VLEG), 532–577 (LYVA…AMDG), and 578–624 (WLYA…VLEL). The interval 640–642 (TSL) is interaction with PDZK1.

In terms of assembly, interacts with F-actin; the interaction disrupts the F-actin structures and leads to marked changes of neuronal morphology. Component of a complex, composed of PDZK1, SYNGAP1, KLHL17 and NMDA receptors. Interacts directly with PDZK1 (via PDZ1 domain); the interaction is important for integrity of actin cytoskeleton structures in neurons. Interacts with DLG4 and SYNGAP1. Interacts (via kelch repeats) with GRIK2 (via C-terminus); the interaction targets GRIK2 for degradation via ubiquitin-proteasome pathway. Interacts with GRIK1. Interacts with (via BTB domain) CUL3; the interaction regulates surface GRIK2 expression.

It localises to the postsynaptic density. It is found in the synapse. The protein operates within protein modification; protein ubiquitination. In terms of biological role, substrate-recognition component of some cullin-RING-based BCR (BTB-CUL3-RBX1) E3 ubiquitin-protein ligase complexes. The BCR(KLHL17) complex mediates the ubiquitination and subsequent degradation of GLUR6. May play a role in the actin-based neuronal function. The polypeptide is Kelch-like protein 17 (KLHL17) (Homo sapiens (Human)).